Here is a 324-residue protein sequence, read N- to C-terminus: tRNA pseudouridine synthase B (324 aa).

Residue D49 is the Nucleophile of the active site. A disordered region spans residues 87-107 (RSTDDLEGQPTKTSDKRPSRE).

The protein belongs to the pseudouridine synthase TruB family. Type 1 subfamily.

It carries out the reaction uridine(55) in tRNA = pseudouridine(55) in tRNA. Responsible for synthesis of pseudouridine from uracil-55 in the psi GC loop of transfer RNAs. This Brucella abortus (strain 2308) protein is tRNA pseudouridine synthase B.